Here is a 294-residue protein sequence, read N- to C-terminus: 33 kDa chaperonin (294 aa).

2 disulfide bridges follow: Cys-238-Cys-240 and Cys-271-Cys-274.

Belongs to the HSP33 family. Under oxidizing conditions two disulfide bonds are formed involving the reactive cysteines. Under reducing conditions zinc is bound to the reactive cysteines and the protein is inactive.

The protein localises to the cytoplasm. Its function is as follows. Redox regulated molecular chaperone. Protects both thermally unfolding and oxidatively damaged proteins from irreversible aggregation. Plays an important role in the bacterial defense system toward oxidative stress. This chain is 33 kDa chaperonin, found in Clostridium novyi (strain NT).